Reading from the N-terminus, the 421-residue chain is Divalent metal cation transporter MntH (421 aa).

11 helical membrane passes run 27–47, 51–71, 100–120, 128–148, 160–180, 201–221, 248–268, 289–309, 337–357, 358–378, and 396–416; these read LGPAFIVSVAYVDPGNFATNI, SLFDYHLIWVILWSNVIAIFL, WFLWITAELAAMATDLAEFLG, LFHIPMTYAAFLTGVVTFAIV, GIIFGLVAVISLAYAFELFIA, AMLIAVGILGATVMPHVIYLH, ILVAMNTAFIINAAMLIVSAA, PLLGVFSSWAFGIALLASGFS, LVTMVPAITIIALGIDPLKSL, IVSQVVLSFELPMAIIPLLLI, and IMGVLVASFVMILNGLLLYLT.

The protein belongs to the NRAMP family.

The protein resides in the cell membrane. Its function is as follows. H(+)-stimulated, divalent metal cation uptake system. The chain is Divalent metal cation transporter MntH from Caldanaerobacter subterraneus subsp. tengcongensis (strain DSM 15242 / JCM 11007 / NBRC 100824 / MB4) (Thermoanaerobacter tengcongensis).